Here is a 272-residue protein sequence, read N- to C-terminus: Small ribosomal subunit protein uS2 (272 aa).

The disordered stretch occupies residues 251–272 (LLTEGAPAAEAPAEAEGETKAE). A compositionally biased stretch (low complexity) spans 253–264 (TEGAPAAEAPAE).

This sequence belongs to the universal ribosomal protein uS2 family.

This Bifidobacterium adolescentis (strain ATCC 15703 / DSM 20083 / NCTC 11814 / E194a) protein is Small ribosomal subunit protein uS2.